The primary structure comprises 274 residues: 4-deoxy-L-threo-5-hexosulose-uronate ketol-isomerase (274 aa).

4 residues coordinate Zn(2+): histidine 192, histidine 194, glutamate 199, and histidine 241.

It belongs to the KduI family. It depends on Zn(2+) as a cofactor.

It catalyses the reaction 5-dehydro-4-deoxy-D-glucuronate = 3-deoxy-D-glycero-2,5-hexodiulosonate. It functions in the pathway glycan metabolism; pectin degradation; 2-dehydro-3-deoxy-D-gluconate from pectin: step 4/5. Its function is as follows. Catalyzes the isomerization of 5-dehydro-4-deoxy-D-glucuronate to 3-deoxy-D-glycero-2,5-hexodiulosonate. The chain is 4-deoxy-L-threo-5-hexosulose-uronate ketol-isomerase from Shigella boydii serotype 18 (strain CDC 3083-94 / BS512).